A 953-amino-acid chain; its full sequence is 2-oxoglutarate dehydrogenase E1 component (953 aa).

Belongs to the alpha-ketoglutarate dehydrogenase family. In terms of assembly, homodimer. Part of the 2-oxoglutarate dehydrogenase (OGDH) complex composed of E1 (2-oxoglutarate dehydrogenase), E2 (dihydrolipoamide succinyltransferase) and E3 (dihydrolipoamide dehydrogenase); the complex contains multiple copies of the three enzymatic components (E1, E2 and E3). It depends on thiamine diphosphate as a cofactor.

The catalysed reaction is N(6)-[(R)-lipoyl]-L-lysyl-[protein] + 2-oxoglutarate + H(+) = N(6)-[(R)-S(8)-succinyldihydrolipoyl]-L-lysyl-[protein] + CO2. In terms of biological role, E1 component of the 2-oxoglutarate dehydrogenase (OGDH) complex which catalyzes the decarboxylation of 2-oxoglutarate, the first step in the conversion of 2-oxoglutarate to succinyl-CoA and CO(2). This Oceanobacillus iheyensis (strain DSM 14371 / CIP 107618 / JCM 11309 / KCTC 3954 / HTE831) protein is 2-oxoglutarate dehydrogenase E1 component.